Here is a 164-residue protein sequence, read N- to C-terminus: R-phycoerythrin alpha chain (164 aa).

8 residues coordinate (2R,3E)-phycoerythrobilin: N47, K81, C82, R84, H88, R137, C139, and R142.

This sequence belongs to the phycobiliprotein family. As to quaternary structure, heterododecamer of 6 alpha and 6 beta chains. The basic functional unit of phycobiliproteins is a ring-shaped hexamer formed from two back-to-back trimers contacting via the alpha chain subunits. The trimers are composed of alpha/beta subunit heterodimers arranged around a three-fold axis of symmetry. The phycoerythrins also contain a gamma subunit which is located in the center of the hexamer. Post-translationally, contains two covalently linked phycoerythrobilin chromophores.

It is found in the plastid. The protein localises to the chloroplast thylakoid membrane. Its function is as follows. Light-harvesting photosynthetic tetrapyrrole chromophore-protein from the phycobiliprotein complex. This Agarophyton chilense (Red seaweed) protein is R-phycoerythrin alpha chain (rpeA).